Here is a 142-residue protein sequence, read N- to C-terminus: Large ribosomal subunit protein uL13 (142 aa).

It belongs to the universal ribosomal protein uL13 family. Part of the 50S ribosomal subunit.

Functionally, this protein is one of the early assembly proteins of the 50S ribosomal subunit, although it is not seen to bind rRNA by itself. It is important during the early stages of 50S assembly. This chain is Large ribosomal subunit protein uL13, found in Aliivibrio fischeri (strain ATCC 700601 / ES114) (Vibrio fischeri).